The sequence spans 60 residues: Large ribosomal subunit protein bL32 (60 aa).

A disordered region spans residues 1–25; the sequence is MAVQQNKKSPSKRGMHRSHNALNVP. Basic residues predominate over residues 9 to 19; it reads SPSKRGMHRSH.

The protein belongs to the bacterial ribosomal protein bL32 family.

The sequence is that of Large ribosomal subunit protein bL32 from Polaromonas naphthalenivorans (strain CJ2).